Reading from the N-terminus, the 275-residue chain is Erythroagglutinating phytohemagglutinin (275 aa).

Positions 1–21 (MASSNLLSLALFLVLLTHANS) are cleaved as a signal peptide. N-linked (GlcNAc...) (high mannose) asparagine glycosylation is present at asparagine 33. N-linked (GlcNAc...) asparagine glycosylation is found at asparagine 81 and asparagine 101.

Belongs to the leguminous lectin family.

In terms of biological role, this insecticidal carbohydrate-binding lectin is toxic for the cowpea weevil. The chain is Erythroagglutinating phytohemagglutinin (DLEC1) from Phaseolus vulgaris (Kidney bean).